The chain runs to 395 residues: Phosphopentomutase (395 aa).

6 residues coordinate Mn(2+): Asp13, Asp288, His293, Asp329, His330, and His341.

Belongs to the phosphopentomutase family. Mn(2+) serves as cofactor.

The protein localises to the cytoplasm. The enzyme catalyses 2-deoxy-alpha-D-ribose 1-phosphate = 2-deoxy-D-ribose 5-phosphate. It catalyses the reaction alpha-D-ribose 1-phosphate = D-ribose 5-phosphate. Its pathway is carbohydrate degradation; 2-deoxy-D-ribose 1-phosphate degradation; D-glyceraldehyde 3-phosphate and acetaldehyde from 2-deoxy-alpha-D-ribose 1-phosphate: step 1/2. In terms of biological role, isomerase that catalyzes the conversion of deoxy-ribose 1-phosphate (dRib-1-P) and ribose 1-phosphate (Rib-1-P) to deoxy-ribose 5-phosphate (dRib-5-P) and ribose 5-phosphate (Rib-5-P), respectively. This chain is Phosphopentomutase, found in Agathobacter rectalis (strain ATCC 33656 / DSM 3377 / JCM 17463 / KCTC 5835 / VPI 0990) (Eubacterium rectale).